Here is a 340-residue protein sequence, read N- to C-terminus: Putative inactive cytochrome P450 family member 4Z2 (340 aa).

Over 1–9 (MEPSWLQEL) the chain is Cytoplasmic. The chain crosses the membrane as a helical; Signal-anchor for type II membrane protein span at residues 10-30 (MAHPFLLLILLCMSLLLFQVI). The Lumenal segment spans residues 31-340 (RLYQRRRWTI…AKYPEHQQRC (310 aa)).

This sequence belongs to the cytochrome P450 family. Requires heme as cofactor. As to expression, detected at low levels in mammary gland and mammary carcinoma.

It localises to the membrane. This chain is Putative inactive cytochrome P450 family member 4Z2 (CYP4Z2P), found in Homo sapiens (Human).